Consider the following 375-residue polypeptide: Kininogen (375 aa).

The first 23 residues, 1-23 (MKLGVRLCVLVVFSLQLWGPGQG), serve as a signal peptide directing secretion. Cystatin kininogen-type domains follow at residues 35–139 (CDDK…VEAP) and 156–260 (VESE…GPLD). A glycan (N-linked (GlcNAc) asparagine) is linked at Asn74. 4 cysteine pairs are disulfide-bonded: Cys91-Cys102, Cys115-Cys133, Cys211-Cys223, and Cys234-Cys254. Asn235 carries N-linked (GlcNAc) asparagine glycosylation. Residues 283-375 (EVKTTQASTA…LSDLDLLGKK (93 aa)) form a disordered region.

N-glycosylated, with sialylated biantennary complex-type glycans. Post-translationally, O-glycosylated, sialylated oligosaccharides. In terms of processing, bradykinin is released from kininogen by kallikrein. The N-terminus is blocked. As to expression, expressed in the skin, liver, intestine, spleen, pancreas and kidney.

It localises to the cytoplasm. The protein resides in the vacuole. Functionally, inhibits papain and ficin (cysteine proteinases) but not trypsin (a serine proteinase). The chain is Kininogen (LOC106584303) from Salmo salar (Atlantic salmon).